The chain runs to 141 residues: Hemoglobin subunit alpha (141 aa).

The Globin domain maps to 1-141; that stretch reads VLSPADKTNV…VSTVLTSKYR (141 aa). Serine 3 bears the Phosphoserine mark. Lysine 7 bears the N6-succinyllysine mark. Threonine 8 carries the post-translational modification Phosphothreonine. At lysine 11 the chain carries N6-succinyllysine. Lysine 16 carries the post-translational modification N6-acetyllysine; alternate. N6-succinyllysine; alternate is present on lysine 16. A Phosphotyrosine modification is found at tyrosine 24. Serine 35 bears the Phosphoserine mark. Lysine 40 carries the N6-succinyllysine modification. Serine 49 carries the phosphoserine modification. Position 58 (histidine 58) interacts with O2. Heme b is bound at residue histidine 87. Phosphoserine is present on serine 102. Residue threonine 108 is modified to Phosphothreonine. Serine 124 and serine 131 each carry phosphoserine. Residues threonine 134 and threonine 137 each carry the phosphothreonine modification. Phosphoserine is present on serine 138.

Belongs to the globin family. As to quaternary structure, heterotetramer of two alpha chains and two beta chains. Red blood cells.

In terms of biological role, involved in oxygen transport from the lung to the various peripheral tissues. Its function is as follows. Hemopressin acts as an antagonist peptide of the cannabinoid receptor CNR1. Hemopressin-binding efficiently blocks cannabinoid receptor CNR1 and subsequent signaling. In Taphozous georgianus (Sharp-nosed tomb bat), this protein is Hemoglobin subunit alpha (HBA).